The sequence spans 1896 residues: von Willebrand factor A domain-containing protein 8 (1896 aa).

The transit peptide at methionine 1–arginine 18 directs the protein to the mitochondrion. Position 439-446 (glycine 439–serine 446) interacts with ATP. The tract at residues glycine 1536–threonine 1564 is disordered. In terms of domain architecture, VWFA spans arginine 1705–isoleucine 1887.

In terms of assembly, monomer.

Its subcellular location is the mitochondrion. In terms of biological role, exhibits ATPase activity in vitro. The sequence is that of von Willebrand factor A domain-containing protein 8 (vwa8) from Danio rerio (Zebrafish).